The primary structure comprises 175 residues: Translation initiation factor IF-3 (175 aa).

This sequence belongs to the IF-3 family. Monomer.

It localises to the cytoplasm. IF-3 binds to the 30S ribosomal subunit and shifts the equilibrium between 70S ribosomes and their 50S and 30S subunits in favor of the free subunits, thus enhancing the availability of 30S subunits on which protein synthesis initiation begins. This chain is Translation initiation factor IF-3, found in Chromobacterium violaceum (strain ATCC 12472 / DSM 30191 / JCM 1249 / CCUG 213 / NBRC 12614 / NCIMB 9131 / NCTC 9757 / MK).